The sequence spans 960 residues: RasGEF domain-containing serine/threonine-protein kinase X (960 aa).

The 254-residue stretch at 21–274 (LEFNEKIGKG…FDEILSQLKV (254 aa)) folds into the Protein kinase domain. Residues 27–35 (IGKGSFGSV) and lysine 48 contribute to the ATP site. Aspartate 140 functions as the Proton acceptor in the catalytic mechanism. The span at 314–368 (NISFSPNNSNNNNNNNNNISNISPDITTGIQQINLSSSGGSNNSSPSTPPQGSQL) shows a compositional bias: low complexity. 2 disordered regions span residues 314-372 (NISF…VSLA) and 393-413 (GQLSTTPPPTSPIQSRPHKPS). Residues 437–565 (PCYAALTSHI…LGTTISNNEL (129 aa)) form the N-terminal Ras-GEF domain. The disordered stretch occupies residues 596 to 651 (NNNNNNNNNPVNNINNINNNNSVNSSSSNNNNNNNNNNSNNNNNNNNNNNNNNNNN). The region spanning 712–957 (HSTELARQIT…KNNSLKCEPP (246 aa)) is the Ras-GEF domain.

It belongs to the protein kinase superfamily. TKL Ser/Thr protein kinase family.

The catalysed reaction is L-seryl-[protein] + ATP = O-phospho-L-seryl-[protein] + ADP + H(+). The enzyme catalyses L-threonyl-[protein] + ATP = O-phospho-L-threonyl-[protein] + ADP + H(+). In terms of biological role, promotes the exchange of Ras-bound GDP by GTP. The protein is RasGEF domain-containing serine/threonine-protein kinase X (gefX) of Dictyostelium discoideum (Social amoeba).